The primary structure comprises 507 residues: ATP synthase subunit alpha, chloroplastic (507 aa).

Residue 170 to 177 participates in ATP binding; that stretch reads GDRQTGKT.

Belongs to the ATPase alpha/beta chains family. As to quaternary structure, F-type ATPases have 2 components, CF(1) - the catalytic core - and CF(0) - the membrane proton channel. CF(1) has five subunits: alpha(3), beta(3), gamma(1), delta(1), epsilon(1). CF(0) has four main subunits: a, b, b' and c.

The protein resides in the plastid. It localises to the chloroplast thylakoid membrane. It catalyses the reaction ATP + H2O + 4 H(+)(in) = ADP + phosphate + 5 H(+)(out). Functionally, produces ATP from ADP in the presence of a proton gradient across the membrane. The alpha chain is a regulatory subunit. The sequence is that of ATP synthase subunit alpha, chloroplastic from Ipomoea purpurea (Common morning glory).